A 179-amino-acid polypeptide reads, in one-letter code: Large ribosomal subunit protein uL6 (179 aa).

This sequence belongs to the universal ribosomal protein uL6 family. As to quaternary structure, part of the 50S ribosomal subunit.

This protein binds to the 23S rRNA, and is important in its secondary structure. It is located near the subunit interface in the base of the L7/L12 stalk, and near the tRNA binding site of the peptidyltransferase center. The protein is Large ribosomal subunit protein uL6 of Chlorobium luteolum (strain DSM 273 / BCRC 81028 / 2530) (Pelodictyon luteolum).